A 279-amino-acid polypeptide reads, in one-letter code: Pantothenate synthetase (279 aa).

27 to 34 (MGYLHEGH) lines the ATP pocket. H34 serves as the catalytic Proton donor. Residue Q58 participates in (R)-pantoate binding. Residue Q58 coordinates beta-alanine. 144 to 147 (GKKD) lines the ATP pocket. Position 150 (Q150) interacts with (R)-pantoate. ATP is bound by residues V173 and 181–184 (MSSR).

This sequence belongs to the pantothenate synthetase family. As to quaternary structure, homodimer.

The protein resides in the cytoplasm. It carries out the reaction (R)-pantoate + beta-alanine + ATP = (R)-pantothenate + AMP + diphosphate + H(+). Its pathway is cofactor biosynthesis; (R)-pantothenate biosynthesis; (R)-pantothenate from (R)-pantoate and beta-alanine: step 1/1. Its function is as follows. Catalyzes the condensation of pantoate with beta-alanine in an ATP-dependent reaction via a pantoyl-adenylate intermediate. This chain is Pantothenate synthetase, found in Citrifermentans bemidjiense (strain ATCC BAA-1014 / DSM 16622 / JCM 12645 / Bem) (Geobacter bemidjiensis).